The chain runs to 2145 residues: Glutamate synthase [NADH] (2145 aa).

Positions 1-53 (MPVLKSDNFDPLEEAYEGGTIQNYNDEHHLHKSWANVIPDKRGLYDPDYEHDA) are excised as a propeptide. Catalysis depends on Cys-54, which acts as the For GATase activity. In terms of domain architecture, Glutamine amidotransferase type-2 spans 54–455 (CGVGFVANKH…PGDLFLVDTQ (402 aa)). 1132–1189 (LAETHQTLVLNDLRRNVVVQTDGQLRTGFDIAVAVLLGAESFTLATVPLIAMGCVMLR) contacts FMN. Positions 1185, 1191, and 1196 each coordinate [3Fe-4S] cluster. A coiled-coil region spans residues 1551–1600 (KKVLLKEKAEAAKAKAKATSEYLKKFRSNQEVDDEVNTLLIANQKAKEQE). 1928–1942 (GGGDTGNDCLGTSVR) serves as a coordination point for NAD(+). Phosphothreonine is present on Thr-2070.

It belongs to the glutamate synthase family. Homotrimer. Requires [3Fe-4S] cluster as cofactor. FAD is required as a cofactor. FMN serves as cofactor.

The enzyme catalyses 2 L-glutamate + NAD(+) = L-glutamine + 2-oxoglutarate + NADH + H(+). It functions in the pathway amino-acid biosynthesis; L-glutamate biosynthesis via GLT pathway; L-glutamate from 2-oxoglutarate and L-glutamine (NAD(+) route): step 1/1. Its pathway is energy metabolism; nitrogen metabolism. With respect to regulation, inhibited by homocysteine sulfonamide. Its function is as follows. Forms L-glutamate from L-glutamine and 2-oxoglutarate. Represents an alternative pathway to L-glutamate dehydrogenase for the biosynthesis of L-glutamate. Participates with glutamine synthetase in ammonia assimilation processes. The enzyme is specific for NADH, L-glutamine and 2-oxoglutarate. This chain is Glutamate synthase [NADH] (GLT1), found in Saccharomyces cerevisiae (strain ATCC 204508 / S288c) (Baker's yeast).